The chain runs to 299 residues: Ethylmalonyl-CoA decarboxylase (299 aa).

The protein belongs to the enoyl-CoA hydratase/isomerase family.

It is found in the cytoplasm. It localises to the cytosol. The catalysed reaction is (2S)-ethylmalonyl-CoA + H(+) = butanoyl-CoA + CO2. It carries out the reaction (S)-methylmalonyl-CoA + H(+) = propanoyl-CoA + CO2. It catalyses the reaction (2R)-ethylmalonyl-CoA + H(+) = butanoyl-CoA + CO2. In terms of biological role, decarboxylates ethylmalonyl-CoA, a potentially toxic metabolite, to form butyryl-CoA, suggesting it might be involved in metabolite proofreading. Acts preferentially on (S)-ethylmalonyl-CoA but also has some activity on the (R)-isomer. Also has methylmalonyl-CoA decarboxylase activity at lower level. This Xenopus laevis (African clawed frog) protein is Ethylmalonyl-CoA decarboxylase (echdc1).